A 149-amino-acid chain; its full sequence is uncharacterized protein (149 aa).

The stretch at histidine 111–phenylalanine 140 forms a coiled coil.

This is an uncharacterized protein from Aquifex aeolicus (strain VF5).